We begin with the raw amino-acid sequence, 232 residues long: uncharacterized protein (232 aa).

The next 5 membrane-spanning stretches (helical) occupy residues 69–91 (LISAIITMVLFSLLTPLMFYILF), 104–126 (FLEPTIYFILFLFGLHACIFFAL), 139–161 (FSRFGAFLIPFTAILILALFFFL), 166–188 (ICFTILAVGLIGAFFAIPPAMLS), and 200–219 (FIYSTIVIYLIICVTFQLII).

The protein resides in the cell membrane. This is an uncharacterized protein from Bacillus subtilis (strain 168).